Reading from the N-terminus, the 174-residue chain is Protein C (174 aa).

This sequence belongs to the morbillivirus protein C family.

The sequence is that of Protein C (P/V/C) from Phocine distemper virus (PDV).